Consider the following 133-residue polypeptide: Small ribosomal subunit protein uS8 (133 aa).

It belongs to the universal ribosomal protein uS8 family. As to quaternary structure, part of the 30S ribosomal subunit. Contacts proteins S5 and S12.

In terms of biological role, one of the primary rRNA binding proteins, it binds directly to 16S rRNA central domain where it helps coordinate assembly of the platform of the 30S subunit. The polypeptide is Small ribosomal subunit protein uS8 (Prochlorococcus marinus (strain MIT 9312)).